Consider the following 399-residue polypeptide: Succinate--CoA ligase [ADP-forming] subunit beta (399 aa).

The ATP-grasp domain maps to 9 to 254; sequence KAVLAEFGAP…ESEEDPKEIE (246 aa). ATP-binding positions include lysine 46, 53–55, glutamate 109, alanine 112, and glutamate 117; that span reads GRG. Residues asparagine 209 and aspartate 223 each contribute to the Mg(2+) site. Substrate-binding positions include asparagine 274 and 331 to 333; that span reads GIM.

This sequence belongs to the succinate/malate CoA ligase beta subunit family. Heterotetramer of two alpha and two beta subunits. Mg(2+) serves as cofactor.

The catalysed reaction is succinate + ATP + CoA = succinyl-CoA + ADP + phosphate. The enzyme catalyses GTP + succinate + CoA = succinyl-CoA + GDP + phosphate. Its pathway is carbohydrate metabolism; tricarboxylic acid cycle; succinate from succinyl-CoA (ligase route): step 1/1. Its function is as follows. Succinyl-CoA synthetase functions in the citric acid cycle (TCA), coupling the hydrolysis of succinyl-CoA to the synthesis of either ATP or GTP and thus represents the only step of substrate-level phosphorylation in the TCA. The beta subunit provides nucleotide specificity of the enzyme and binds the substrate succinate, while the binding sites for coenzyme A and phosphate are found in the alpha subunit. The chain is Succinate--CoA ligase [ADP-forming] subunit beta from Caulobacter vibrioides (strain NA1000 / CB15N) (Caulobacter crescentus).